The primary structure comprises 538 residues: tRNA-2-methylthio-N(6)-dimethylallyladenosine synthase (538 aa).

Residues methionine 1–serine 23 are disordered. Residues lysine 95–phenylalanine 213 form the MTTase N-terminal domain. 6 residues coordinate [4Fe-4S] cluster: cysteine 104, cysteine 140, cysteine 174, cysteine 250, cysteine 254, and cysteine 257. The 231-residue stretch at arginine 236–glutamine 466 folds into the Radical SAM core domain. The TRAM domain occupies leucine 469–glutamate 532.

This sequence belongs to the methylthiotransferase family. MiaB subfamily. In terms of assembly, monomer. [4Fe-4S] cluster serves as cofactor.

Its subcellular location is the cytoplasm. It carries out the reaction N(6)-dimethylallyladenosine(37) in tRNA + (sulfur carrier)-SH + AH2 + 2 S-adenosyl-L-methionine = 2-methylsulfanyl-N(6)-dimethylallyladenosine(37) in tRNA + (sulfur carrier)-H + 5'-deoxyadenosine + L-methionine + A + S-adenosyl-L-homocysteine + 2 H(+). Catalyzes the methylthiolation of N6-(dimethylallyl)adenosine (i(6)A), leading to the formation of 2-methylthio-N6-(dimethylallyl)adenosine (ms(2)i(6)A) at position 37 in tRNAs that read codons beginning with uridine. This chain is tRNA-2-methylthio-N(6)-dimethylallyladenosine synthase, found in Halalkalibacterium halodurans (strain ATCC BAA-125 / DSM 18197 / FERM 7344 / JCM 9153 / C-125) (Bacillus halodurans).